The chain runs to 74 residues: Anaphase-promoting complex subunit 13 (74 aa).

Residues 33–53 form a disordered region; it reads LNELPDPEQDNGGTTESVKEQ.

This sequence belongs to the APC13 family. The mammalian APC/C is composed at least of 14 distinct subunits ANAPC1, ANAPC2, CDC27/APC3, ANAPC4, ANAPC5, CDC16/APC6, ANAPC7, CDC23/APC8, ANAPC10, ANAPC11, CDC26/APC12, ANAPC13, ANAPC15 and ANAPC16 that assemble into a complex of at least 19 chains with a combined molecular mass of around 1.2 MDa; APC/C interacts with FZR1 and FBXO5.

It is found in the nucleus. Its pathway is protein modification; protein ubiquitination. Component of the anaphase promoting complex/cyclosome (APC/C), a cell cycle-regulated E3 ubiquitin ligase that controls progression through mitosis and the G1 phase of the cell cycle. The APC/C complex acts by mediating ubiquitination and subsequent degradation of target proteins: it mainly mediates the formation of 'Lys-11'-linked polyubiquitin chains and, to a lower extent, the formation of 'Lys-48'- and 'Lys-63'-linked polyubiquitin chains. The APC/C complex catalyzes assembly of branched 'Lys-11'-/'Lys-48'-linked branched ubiquitin chains on target proteins. The polypeptide is Anaphase-promoting complex subunit 13 (ANAPC13) (Pongo abelii (Sumatran orangutan)).